The following is an 88-amino-acid chain: Acylphosphatase (88 aa).

The Acylphosphatase-like domain occupies Arg3–Tyr88. Residues Arg18 and Asn36 contribute to the active site.

This sequence belongs to the acylphosphatase family.

The enzyme catalyses an acyl phosphate + H2O = a carboxylate + phosphate + H(+). In Thermus thermophilus (strain ATCC BAA-163 / DSM 7039 / HB27), this protein is Acylphosphatase (acyP).